The following is a 547-amino-acid chain: MTTSTSKNAISKSSQEDLCSDTKDKGSSGGGNEANAEASKAIQGFRLVLLFVGLALSVFCLSLVCISEFISTFLFTRTYPDVFGFGRIVQSWLRPFRELRPSLIPLTTWRGSAPLTCYPRVVFSFLLESCTRSSRYGACSLRRWVFSSWDHSSAHLAPSLLLPGLCPCIVAQSVFTDRATWRWCFWINLPLGGVTAVAVFLFVRLPSPQGGATTFLGLLQKLDALGTCILMPLIICLLLALQWGGTTYAWNSWRVVLCLVLFTVLLVAWLYVQYRQGDGGALPLRIVRQRSIRSAILFTFGINGSMFIIVYYVPIWFQAVKDVTAQQSGINFLACSGSMSVAAIIAGTLVSTGEEKQHQGQWRIFNYTTLVSIATGLIWRYNPATSTAYCRAGTLVMFGFGAGSGMQMPFIAAQTVLSASDISLGSSLIILIQTMGGAVFLAVSQNLFQSKLIGLLESHPYGVEPEFILDTGASGLRSAVQHKYGTKAVETVLQAYNTALRQCFLVCIVLACLTIIADAGMEWKNVRAGKKPAKAPDAHHESKTDIK.

A compositionally biased stretch (polar residues) spans Met-1 to Asp-17. The disordered stretch occupies residues Met-1–Glu-33. 11 helical membrane passes run Leu-47–Ser-67, Leu-156–Thr-176, Trp-183–Val-203, Ala-224–Gly-244, Ser-252–Val-272, Ile-296–Trp-316, Ile-330–Val-350, Gly-360–Asn-382, Ala-392–Ala-412, Ile-422–Ala-442, and Cys-503–Trp-523.

Belongs to the major facilitator superfamily. TCR/Tet family.

Its subcellular location is the cell membrane. Functionally, MFS-type transporer; part of the gene cluster that mediates the biosynthesis of varicidin A, an antifungal natural product containing a cis-octahydrodecalin core. The sequence is that of Varicidin biosynthesis cluster MFS-type transporer from Talaromyces variabilis (Penicillium variabile).